Reading from the N-terminus, the 540-residue chain is Putative cysteine ligase BshC (540 aa).

Residues 457–477 (EKNRAFIQGQIAFLKERMERE) are a coiled coil.

This sequence belongs to the BshC family.

In terms of biological role, involved in bacillithiol (BSH) biosynthesis. May catalyze the last step of the pathway, the addition of cysteine to glucosamine malate (GlcN-Mal) to generate BSH. In Shouchella clausii (strain KSM-K16) (Alkalihalobacillus clausii), this protein is Putative cysteine ligase BshC.